A 135-amino-acid polypeptide reads, in one-letter code: Small ribosomal subunit protein eS6 (135 aa).

It belongs to the eukaryotic ribosomal protein eS6 family.

The protein is Small ribosomal subunit protein eS6 of Halorubrum lacusprofundi (strain ATCC 49239 / DSM 5036 / JCM 8891 / ACAM 34).